Here is a 144-residue protein sequence, read N- to C-terminus: Transcription antitermination protein NusB (144 aa).

The protein belongs to the NusB family.

In terms of biological role, involved in transcription antitermination. Required for transcription of ribosomal RNA (rRNA) genes. Binds specifically to the boxA antiterminator sequence of the ribosomal RNA (rrn) operons. In Streptomyces avermitilis (strain ATCC 31267 / DSM 46492 / JCM 5070 / NBRC 14893 / NCIMB 12804 / NRRL 8165 / MA-4680), this protein is Transcription antitermination protein NusB.